The primary structure comprises 425 residues: Histidine--tRNA ligase (425 aa).

Belongs to the class-II aminoacyl-tRNA synthetase family. In terms of assembly, homodimer.

The protein resides in the cytoplasm. The enzyme catalyses tRNA(His) + L-histidine + ATP = L-histidyl-tRNA(His) + AMP + diphosphate + H(+). This is Histidine--tRNA ligase from Shewanella sp. (strain ANA-3).